A 75-amino-acid polypeptide reads, in one-letter code: Guanine nucleotide-binding protein G(I)/G(S)/G(O) subunit gamma-4 (75 aa).

The residue at position 72 (Cys-72) is a Cysteine methyl ester. Cys-72 carries the S-geranylgeranyl cysteine lipid modification. The propeptide at 73-75 is removed in mature form; sequence TIL.

It belongs to the G protein gamma family. As to quaternary structure, g proteins are composed of 3 units, alpha, beta and gamma. Interacts with beta-1 and beta-2, but not with beta-3. Interacts with KCNK1. Interacts (via C-terminus) with KCNK2/TREK-1 (via N-terminus); this interaction confers ion selectivity to Cl(-) and L-glutamate. In terms of tissue distribution, brain, kidney, pancreas, skeletal muscle and faintly in cardiac muscle.

Its subcellular location is the cell membrane. In terms of biological role, guanine nucleotide-binding proteins (G proteins) are involved as a modulator or transducer in various transmembrane signaling systems. The beta and gamma chains are required for the GTPase activity, for replacement of GDP by GTP, and for G protein-effector interaction. This Homo sapiens (Human) protein is Guanine nucleotide-binding protein G(I)/G(S)/G(O) subunit gamma-4 (GNG4).